Consider the following 264-residue polypeptide: GTP cyclohydrolase FolE2 (264 aa).

It belongs to the GTP cyclohydrolase IV family.

It carries out the reaction GTP + H2O = 7,8-dihydroneopterin 3'-triphosphate + formate + H(+). Its pathway is cofactor biosynthesis; 7,8-dihydroneopterin triphosphate biosynthesis; 7,8-dihydroneopterin triphosphate from GTP: step 1/1. Its function is as follows. Converts GTP to 7,8-dihydroneopterin triphosphate. The chain is GTP cyclohydrolase FolE2 from Akkermansia muciniphila (strain ATCC BAA-835 / DSM 22959 / JCM 33894 / BCRC 81048 / CCUG 64013 / CIP 107961 / Muc).